We begin with the raw amino-acid sequence, 426 residues long: Flotillin-1 (426 aa).

The protein belongs to the band 7/mec-2 family. Flotillin subfamily. In terms of assembly, heterooligomeric complex of flotillins 1 and 2 and caveolins 1 and 2. Expressed in brain and ventral nerve cord from stage 12-16 of embryogenesis.

It is found in the cell membrane. The protein resides in the membrane. Its subcellular location is the caveola. May act as a scaffolding protein within caveolar membranes, functionally participating in formation of caveolae or caveolae-like vesicles. This Drosophila melanogaster (Fruit fly) protein is Flotillin-1.